We begin with the raw amino-acid sequence, 357 residues long: 3-isopropylmalate dehydrogenase (357 aa).

76 to 89 (GPKWDDLPSEKRPE) serves as a coordination point for NAD(+). Residues Arg-96, Arg-106, Arg-135, and Asp-224 each coordinate substrate. The Mg(2+) site is built by Asp-224, Asp-248, and Asp-252. 282 to 294 (GSAPDIAGQDKAN) lines the NAD(+) pocket.

The protein belongs to the isocitrate and isopropylmalate dehydrogenases family. LeuB type 1 subfamily. In terms of assembly, homodimer. Mg(2+) is required as a cofactor. Mn(2+) serves as cofactor.

The protein localises to the cytoplasm. The enzyme catalyses (2R,3S)-3-isopropylmalate + NAD(+) = 4-methyl-2-oxopentanoate + CO2 + NADH. It participates in amino-acid biosynthesis; L-leucine biosynthesis; L-leucine from 3-methyl-2-oxobutanoate: step 3/4. Its function is as follows. Catalyzes the oxidation of 3-carboxy-2-hydroxy-4-methylpentanoate (3-isopropylmalate) to 3-carboxy-4-methyl-2-oxopentanoate. The product decarboxylates to 4-methyl-2 oxopentanoate. This chain is 3-isopropylmalate dehydrogenase, found in Nitratidesulfovibrio vulgaris (strain ATCC 29579 / DSM 644 / CCUG 34227 / NCIMB 8303 / VKM B-1760 / Hildenborough) (Desulfovibrio vulgaris).